Reading from the N-terminus, the 549-residue chain is Probable protein kinase UbiB (549 aa).

A Protein kinase domain is found at 123–501 (DFNDTPLASA…QQKSHKSNYL (379 aa)). ATP contacts are provided by residues 129–137 (LASASISQV) and Lys152. Asp287 serves as the catalytic Proton acceptor. The next 2 helical transmembrane spans lie at 498–518 (SNYLLITSAVLLICGTILFTQ) and 519–539 (IVTLWPAYTCIGAGILIWAIG).

It belongs to the ABC1 family. UbiB subfamily.

The protein resides in the cell inner membrane. It functions in the pathway cofactor biosynthesis; ubiquinone biosynthesis [regulation]. Functionally, is probably a protein kinase regulator of UbiI activity which is involved in aerobic coenzyme Q (ubiquinone) biosynthesis. The protein is Probable protein kinase UbiB of Shewanella frigidimarina (strain NCIMB 400).